The primary structure comprises 614 residues: MPAYRSRTSTHGRNMAGARSLWRATGMKNEDFGKPIIAVVNSFTQFVPGHVHLKDLGQLVAREIEKAGGIAKEFNTIAIDDGIAMGHDGMLYSLPSRELIADSVEYMVNGHCADAMVCISNCDKITPGMLMASLRLNIPSVFVSGGPMEAGKVVLSTGARKVDLIDAMVSAADDSMSDADVAVMEENACPTCGSCSGMFTANSMNCLTEALGLSLPGNGSVLATHADRQRLFVEAGHLIVDITRRYYEQNDDSVLPRNVASFAAFENAMSLDIAMGGSTNTVLHLLAAAQEGEVNFTMTDIDRLSRRVPCLCKVAPSVATVHMEDVHRAGGIMSILGQLDAAGLLNGDTKTVHATSLRAAIDRWDISRTNSDSVRQFYLAAPGGVPSQTAFSQSQRWDSLDTDRENGVIRSKAHAFSQDGGLAVLFGNIALDGCIVKTAGVDDSILKFSGPAVVYESQDDAVNGILTGKVKEGDVVVIRYEGPRGGPGMQEMLYPTSYLKSKGLGKACALITDGRFSGGTSGLSIGHCSPEAAEGGTIGLVETGDMIDIDIPNRGINLRVSDAVLAERRKAMEAKGKDAWKPVAPRKRKISSALKAYALFASSAAKGAVRVLKD.

Asp81 lines the Mg(2+) pocket. Cys122 serves as a coordination point for [2Fe-2S] cluster. Mg(2+) contacts are provided by Asp123 and Lys124. N6-carboxylysine is present on Lys124. Cys195 contacts [2Fe-2S] cluster. Residue Glu491 coordinates Mg(2+). The active-site Proton acceptor is the Ser517.

This sequence belongs to the IlvD/Edd family. As to quaternary structure, homodimer. [2Fe-2S] cluster is required as a cofactor. The cofactor is Mg(2+).

It catalyses the reaction (2R)-2,3-dihydroxy-3-methylbutanoate = 3-methyl-2-oxobutanoate + H2O. The catalysed reaction is (2R,3R)-2,3-dihydroxy-3-methylpentanoate = (S)-3-methyl-2-oxopentanoate + H2O. It participates in amino-acid biosynthesis; L-isoleucine biosynthesis; L-isoleucine from 2-oxobutanoate: step 3/4. It functions in the pathway amino-acid biosynthesis; L-valine biosynthesis; L-valine from pyruvate: step 3/4. In terms of biological role, functions in the biosynthesis of branched-chain amino acids. Catalyzes the dehydration of (2R,3R)-2,3-dihydroxy-3-methylpentanoate (2,3-dihydroxy-3-methylvalerate) into 2-oxo-3-methylpentanoate (2-oxo-3-methylvalerate) and of (2R)-2,3-dihydroxy-3-methylbutanoate (2,3-dihydroxyisovalerate) into 2-oxo-3-methylbutanoate (2-oxoisovalerate), the penultimate precursor to L-isoleucine and L-valine, respectively. This chain is Dihydroxy-acid dehydratase, found in Rhodopseudomonas palustris (strain BisA53).